Reading from the N-terminus, the 368-residue chain is 4-hydroxy-3-methylbut-2-en-1-yl diphosphate synthase (flavodoxin) (368 aa).

[4Fe-4S] cluster is bound by residues Cys271, Cys274, Cys306, and Glu313.

This sequence belongs to the IspG family. [4Fe-4S] cluster is required as a cofactor.

The enzyme catalyses (2E)-4-hydroxy-3-methylbut-2-enyl diphosphate + oxidized [flavodoxin] + H2O + 2 H(+) = 2-C-methyl-D-erythritol 2,4-cyclic diphosphate + reduced [flavodoxin]. The protein operates within isoprenoid biosynthesis; isopentenyl diphosphate biosynthesis via DXP pathway; isopentenyl diphosphate from 1-deoxy-D-xylulose 5-phosphate: step 5/6. Its function is as follows. Converts 2C-methyl-D-erythritol 2,4-cyclodiphosphate (ME-2,4cPP) into 1-hydroxy-2-methyl-2-(E)-butenyl 4-diphosphate. The sequence is that of 4-hydroxy-3-methylbut-2-en-1-yl diphosphate synthase (flavodoxin) from Histophilus somni (strain 129Pt) (Haemophilus somnus).